We begin with the raw amino-acid sequence, 201 residues long: Ciliary microtubule inner protein 2C (201 aa).

Belongs to the CIMIP2 family. Microtubule inner protein component of sperm flagellar doublet microtubules. In terms of tissue distribution, expressed in airway epithelial cells.

It localises to the cytoplasm. Its subcellular location is the cytoskeleton. It is found in the cilium axoneme. The protein localises to the flagellum axoneme. Microtubule inner protein (MIP) part of the dynein-decorated doublet microtubules (DMTs) in cilia axoneme, which is required for motile cilia beating. Binds to the intra-tubulin interfaces. This Homo sapiens (Human) protein is Ciliary microtubule inner protein 2C.